A 588-amino-acid polypeptide reads, in one-letter code: L-fucose isomerase (588 aa).

Catalysis depends on proton acceptor residues E335 and D359. Mn(2+)-binding residues include E335, D359, and H525.

The protein belongs to the L-fucose isomerase family. The cofactor is Mn(2+).

Its subcellular location is the cytoplasm. The catalysed reaction is L-fucose = L-fuculose. Its pathway is carbohydrate degradation; L-fucose degradation; L-lactaldehyde and glycerone phosphate from L-fucose: step 1/3. Functionally, converts the aldose L-fucose into the corresponding ketose L-fuculose. The polypeptide is L-fucose isomerase (Streptococcus pneumoniae (strain JJA)).